Here is a 199-residue protein sequence, read N- to C-terminus: UPF0637 protein YsbB (199 aa).

The protein belongs to the UPF0637 family.

This is UPF0637 protein YsbB (ysbB) from Lactococcus lactis subsp. lactis (strain IL1403) (Streptococcus lactis).